Here is a 418-residue protein sequence, read N- to C-terminus: Serine hydroxymethyltransferase (418 aa).

Residues Leu121 and 125–127 (GHL) contribute to the (6S)-5,6,7,8-tetrahydrofolate site. At Lys230 the chain carries N6-(pyridoxal phosphate)lysine. Position 355–357 (355–357 (SPF)) interacts with (6S)-5,6,7,8-tetrahydrofolate.

It belongs to the SHMT family. In terms of assembly, homodimer. Pyridoxal 5'-phosphate is required as a cofactor.

The protein localises to the cytoplasm. The catalysed reaction is (6R)-5,10-methylene-5,6,7,8-tetrahydrofolate + glycine + H2O = (6S)-5,6,7,8-tetrahydrofolate + L-serine. The protein operates within one-carbon metabolism; tetrahydrofolate interconversion. It functions in the pathway amino-acid biosynthesis; glycine biosynthesis; glycine from L-serine: step 1/1. Functionally, catalyzes the reversible interconversion of serine and glycine with tetrahydrofolate (THF) serving as the one-carbon carrier. This reaction serves as the major source of one-carbon groups required for the biosynthesis of purines, thymidylate, methionine, and other important biomolecules. Also exhibits THF-independent aldolase activity toward beta-hydroxyamino acids, producing glycine and aldehydes, via a retro-aldol mechanism. The chain is Serine hydroxymethyltransferase from Methylococcus capsulatus (strain ATCC 33009 / NCIMB 11132 / Bath).